A 102-amino-acid polypeptide reads, in one-letter code: Small ribosomal subunit protein uS10 (102 aa).

It belongs to the universal ribosomal protein uS10 family. As to quaternary structure, part of the 30S ribosomal subunit.

In terms of biological role, involved in the binding of tRNA to the ribosomes. The protein is Small ribosomal subunit protein uS10 of Levilactobacillus brevis (strain ATCC 367 / BCRC 12310 / CIP 105137 / JCM 1170 / LMG 11437 / NCIMB 947 / NCTC 947) (Lactobacillus brevis).